Here is a 312-residue protein sequence, read N- to C-terminus: Olfactory receptor 10K2 (312 aa).

Topologically, residues 1 to 25 (MERVNETVVREVIFLGFSSLARLQQ) are extracellular. N-linked (GlcNAc...) asparagine glycosylation occurs at Asn5. The chain crosses the membrane as a helical span at residues 26–46 (LLFVIFLLLYLFTLGTNAIII). Residues 47–54 (STIVLDRA) lie on the Cytoplasmic side of the membrane. A helical transmembrane segment spans residues 55 to 75 (LHIPMYFFLAILSCSEICYTF). The Extracellular portion of the chain corresponds to 76 to 99 (IIVPKMLVDLLSQKKTISFLGCAI). Residues 100-120 (QMFSFLFLGCSHSFLLAVMGY) traverse the membrane as a helical segment. Residues 121-139 (DRYIAICNPLRYSVLMGHG) lie on the Cytoplasmic side of the membrane. Residues 140-160 (VCMGLVAAACACGFTVAQIIT) form a helical membrane-spanning segment. Topologically, residues 161-197 (SLVFHLPFYSSNQLHHFFCDIAPVLKLASHHNHFSQI) are extracellular. Residues 198 to 217 (VIFMLCTLVLAIPLLLILVS) form a helical membrane-spanning segment. Residues 218–237 (YVHILSAILQFPSTLGRCKA) are Cytoplasmic-facing. The helical transmembrane segment at 238 to 258 (FSTCVSHLIIVTVHYGCASFI) threads the bilayer. At 259–271 (YLRPQSNYSSSQD) the chain is on the extracellular side. Asn265 carries an N-linked (GlcNAc...) asparagine glycan. The chain crosses the membrane as a helical span at residues 272–292 (ALISVSYTIITPLFNPMIYSL). The Cytoplasmic portion of the chain corresponds to 293-312 (RNKEFKSALCKIVRRTISLL).

It belongs to the G-protein coupled receptor 1 family.

The protein localises to the cell membrane. Its function is as follows. Odorant receptor. The chain is Olfactory receptor 10K2 (OR10K2) from Homo sapiens (Human).